Here is a 564-residue protein sequence, read N- to C-terminus: Proline--tRNA ligase (564 aa).

This sequence belongs to the class-II aminoacyl-tRNA synthetase family. ProS type 1 subfamily. In terms of assembly, homodimer.

The protein localises to the cytoplasm. It catalyses the reaction tRNA(Pro) + L-proline + ATP = L-prolyl-tRNA(Pro) + AMP + diphosphate. In terms of biological role, catalyzes the attachment of proline to tRNA(Pro) in a two-step reaction: proline is first activated by ATP to form Pro-AMP and then transferred to the acceptor end of tRNA(Pro). As ProRS can inadvertently accommodate and process non-cognate amino acids such as alanine and cysteine, to avoid such errors it has two additional distinct editing activities against alanine. One activity is designated as 'pretransfer' editing and involves the tRNA(Pro)-independent hydrolysis of activated Ala-AMP. The other activity is designated 'posttransfer' editing and involves deacylation of mischarged Ala-tRNA(Pro). The misacylated Cys-tRNA(Pro) is not edited by ProRS. In Xylella fastidiosa (strain M12), this protein is Proline--tRNA ligase.